Here is a 446-residue protein sequence, read N- to C-terminus: Phosphoglucosamine mutase (446 aa).

The active-site Phosphoserine intermediate is the Ser-99. Residues Ser-99, Asp-242, Asp-244, and Asp-246 each contribute to the Mg(2+) site. The residue at position 99 (Ser-99) is a Phosphoserine.

The protein belongs to the phosphohexose mutase family. Mg(2+) serves as cofactor. Post-translationally, activated by phosphorylation.

The enzyme catalyses alpha-D-glucosamine 1-phosphate = D-glucosamine 6-phosphate. Catalyzes the conversion of glucosamine-6-phosphate to glucosamine-1-phosphate. The polypeptide is Phosphoglucosamine mutase (Wolinella succinogenes (strain ATCC 29543 / DSM 1740 / CCUG 13145 / JCM 31913 / LMG 7466 / NCTC 11488 / FDC 602W) (Vibrio succinogenes)).